The chain runs to 148 residues: uncharacterized protein (148 aa).

A signal peptide spans Met-1 to Ala-20.

This is an uncharacterized protein from Haemophilus influenzae (strain ATCC 51907 / DSM 11121 / KW20 / Rd).